A 430-amino-acid chain; its full sequence is Enolase (430 aa).

Gln164 is a binding site for (2R)-2-phosphoglycerate. The active-site Proton donor is Glu208. Asp245, Glu288, and Asp315 together coordinate Mg(2+). Residues Lys340, Arg369, Ser370, and Lys391 each coordinate (2R)-2-phosphoglycerate. Catalysis depends on Lys340, which acts as the Proton acceptor.

Belongs to the enolase family. Mg(2+) is required as a cofactor.

The protein resides in the cytoplasm. Its subcellular location is the secreted. It is found in the cell surface. It catalyses the reaction (2R)-2-phosphoglycerate = phosphoenolpyruvate + H2O. The protein operates within carbohydrate degradation; glycolysis; pyruvate from D-glyceraldehyde 3-phosphate: step 4/5. Catalyzes the reversible conversion of 2-phosphoglycerate (2-PG) into phosphoenolpyruvate (PEP). It is essential for the degradation of carbohydrates via glycolysis. This Pyrococcus furiosus (strain ATCC 43587 / DSM 3638 / JCM 8422 / Vc1) protein is Enolase.